We begin with the raw amino-acid sequence, 193 residues long: Interleukin-23 subunit alpha (193 aa).

An N-terminal signal peptide occupies residues 1-22; that stretch reads MLGSRAVMLMLLLLLLPWTSQG.

The protein belongs to the IL-6 superfamily. As to quaternary structure, heterodimer with IL12B; disulfide-linked. The heterodimer is known as interleukin IL-23. Interacts with IL23R; this interaction enables recruitment of IL12RB1.

The protein localises to the secreted. Its function is as follows. Associates with IL12B to form the pro-inflammatory cytokine IL-23 that plays different roles in innate and adaptive immunity. Released by antigen-presenting cells such as dendritic cells or macrophages, binds to a heterodimeric receptor complex composed of IL12RB1 and IL23R to activate JAK2 and TYK2 which then phosphorylate the receptor to form a docking site leading to the phosphorylation of STAT3 and STAT4. This process leads to activation of several pathways including p38 MAPK or NF-kappa-B and promotes the production of pro-inflammatory cytokines such as interleukin-17A/IL17A. In turn, participates in the early and effective intracellular bacterial clearance. Promotes the expansion and survival of T-helper 17 cells, a CD4-positive helper T-cell subset that produces IL-17, as well as other IL-17-producing cells. The protein is Interleukin-23 subunit alpha (IL23A) of Sus scrofa (Pig).